A 172-amino-acid polypeptide reads, in one-letter code: Stellate protein CG33237 (172 aa).

This sequence belongs to the casein kinase 2 subunit beta family. Interacts in vitro with the casein kinase 2 alpha subunit (CkII-alpha). The relevance of such interaction is however unclear in vivo. In terms of tissue distribution, probably not expressed in wild-type flies. In males lacking the Y chromosome, it is testis-specific and constitutes the main component of star-shaped crystals.

Its function is as follows. Unknown. In males lacking the Y chromosome, its strong overexpression leads to the appearance of proteinaceous star-shaped crystals in the primary spermatocytes causing meiotic drive, possibly by interfering with normal casein kinase 2 activity. The polypeptide is Stellate protein CG33237 (Ste:CG33237) (Drosophila melanogaster (Fruit fly)).